A 451-amino-acid chain; its full sequence is MSNVIENLGKLDRKVTLAIPKAEVEKEKQERLVRLSKTVKMSGFRPGKVPMKMVEKQYGQQVEFEVRFDKAARKFFDITKEQDVKVAGQPKFEIKNEGVGEDEVAFDATFEVYPEVTIGDLSAAEVTRTGTEITDAEVDKTIDILRKQRVHYHARGEAGEHGDGGADVAAQNGDRVTLDFVGKIDGEEFAGGKAEDFPFVLGEGRMLPEFEQAALGLKVGESKTFPLAFPEDYHGKEVAGKTAEFTVTLKKIEWAHLPEVNDAFAKSLGIADGSVEKMRADIRENLEREVKRRTHSMLKDQVMEALLKASELEVPKALIEQDQERLVEMARRDLEQRGMPNAKDMPIPAEMFAQQAERRVKLGLILAEIVKANGLEAKADQIKAEIEDFAKSYEDPKEVMRWYYGDQQRLAEMEAYVLENNVVNFVCGKAKVTDKKVSFEELTAEGNQQQA.

The region spanning 173–258 is the PPIase FKBP-type domain; it reads GDRVTLDFVG…LKKIEWAHLP (86 aa).

The protein belongs to the FKBP-type PPIase family. Tig subfamily.

It is found in the cytoplasm. It catalyses the reaction [protein]-peptidylproline (omega=180) = [protein]-peptidylproline (omega=0). Its function is as follows. Involved in protein export. Acts as a chaperone by maintaining the newly synthesized protein in an open conformation. Functions as a peptidyl-prolyl cis-trans isomerase. The sequence is that of Trigger factor from Cupriavidus necator (strain ATCC 17699 / DSM 428 / KCTC 22496 / NCIMB 10442 / H16 / Stanier 337) (Ralstonia eutropha).